A 160-amino-acid chain; its full sequence is MTRKQRRLFMIFGALGTLGVAVGLILFALSDNIVFFYGPTELAEKAPHPGARLRIGGLVKPGSLEREAGQTVHFIVTDNKHDVAVTYTGLLPDLFREGQGVVTEGTLTGKETLRADSVLAKHDERYMPREVADALKKQGVWQEDGQAKPATQGAAAPLIR.

At 1–7 the chain is on the cytoplasmic side; sequence MTRKQRR. Residues 8–28 form a helical; Signal-anchor for type II membrane protein membrane-spanning segment; the sequence is LFMIFGALGTLGVAVGLILFA. Topologically, residues 29–160 are periplasmic; it reads LSDNIVFFYG…TQGAAAPLIR (132 aa). Residues His-122 and Tyr-126 each coordinate heme. The interval 140 to 160 is disordered; sequence VWQEDGQAKPATQGAAAPLIR.

Belongs to the CcmE/CycJ family.

It localises to the cell inner membrane. Functionally, heme chaperone required for the biogenesis of c-type cytochromes. Transiently binds heme delivered by CcmC and transfers the heme to apo-cytochromes in a process facilitated by CcmF and CcmH. The polypeptide is Cytochrome c-type biogenesis protein CcmE (Beijerinckia indica subsp. indica (strain ATCC 9039 / DSM 1715 / NCIMB 8712)).